A 593-amino-acid chain; its full sequence is MEPATAPRPDMAPELTPEEEQATKQFLEEINKWTVQYNVSPLSWNVAVKFLMARKFDVLRAIELFHSYRETRRKEGIVKLKPHEEPLRSEILSGKFTILNVRDPTGASIALFTARLHHPHKSVQHVVLQALFYLLDRAVDSFETQRNGLVFIYDMCGSNYANFELDLGKKVLNLLKGAFPARLKKVLIVGAPIWFRVPYSIISLLLKDKVRERIQILKTSEVTQHLPRECLPENLGGYVKIDLATWNFQFLPQVNGHPDPFDEIILFSLPPALDWDSVHVPGPHAMTIQELVDYVNARQKQGIYEEYEDIRRENPVGTFHCSMSPGNLEKNRYGDVPCLDQTRVKLTKRSGHTQTDYINASFMDGYKQKNAYIGTQGPLENTYRDFWLMVWEQKVLVIVMTTRFEEGGRRKCGQYWPLEKDSRIRFGFLTVTNLGVENMNHYKKTTLEIHNTEERQKRQVTHFQFLSWPDYGVPSSAASLIDFLRVVRNQQSLAVSNMGARSKGQCPEPPIVVHCSAGIGRTGTFCSLDICLAQLEELGTLNVFQTVSRMRTQRAFSIQTPEQYYFCYKAILEFAEKEGMVSSGQNLLAVESQ.

N-acetylmethionine is present on M1. The tract at residues 1 to 21 (MEPATAPRPDMAPELTPEEEQ) is disordered. In terms of domain architecture, CRAL-TRIO spans 84–243 (EEPLRSEILS…NLGGYVKIDL (160 aa)). One can recognise a Tyrosine-protein phosphatase domain in the interval 303 to 574 (IYEEYEDIRR…YFCYKAILEF (272 aa)). Substrate-binding positions include D470, 515–521 (CSAGIGR), and Q559. Residue C515 is the Phosphocysteine intermediate of the active site.

The protein belongs to the protein-tyrosine phosphatase family. Non-receptor class 3 subfamily.

The protein resides in the cytoplasm. It catalyses the reaction O-phospho-L-tyrosyl-[protein] + H2O = L-tyrosyl-[protein] + phosphate. Its function is as follows. Protein-tyrosine phosphatase that could participate in the transfer of hydrophobic ligands or in functions of the Golgi apparatus. The polypeptide is Tyrosine-protein phosphatase non-receptor type 9 (PTPN9) (Homo sapiens (Human)).